Reading from the N-terminus, the 689-residue chain is Elongation factor G (689 aa).

In terms of domain architecture, tr-type G spans 8 to 282 (ERTRNIGIMA…AVVDYLPAPT (275 aa)). Residues 17–24 (AHIDAGKT), 81–85 (DTPGH), and 135–138 (NKMD) each bind GTP.

Belongs to the TRAFAC class translation factor GTPase superfamily. Classic translation factor GTPase family. EF-G/EF-2 subfamily.

It localises to the cytoplasm. Catalyzes the GTP-dependent ribosomal translocation step during translation elongation. During this step, the ribosome changes from the pre-translocational (PRE) to the post-translocational (POST) state as the newly formed A-site-bound peptidyl-tRNA and P-site-bound deacylated tRNA move to the P and E sites, respectively. Catalyzes the coordinated movement of the two tRNA molecules, the mRNA and conformational changes in the ribosome. This chain is Elongation factor G, found in Desulforudis audaxviator (strain MP104C).